The following is a 503-amino-acid chain: Aminoaldehyde dehydrogenase 2, peroxisomal (503 aa).

Residues isoleucine 28 and aspartate 99 each contribute to the Na(+) site. Residues tryptophan 161 and lysine 185 each coordinate NAD(+). Position 189 (leucine 189) interacts with Na(+). NAD(+) is bound at residue serine 239. The active-site Proton acceptor is glutamate 260. Cysteine 294 acts as the Nucleophile in catalysis. Positions alanine 501–leucine 503 match the Microbody targeting signal motif.

It belongs to the aldehyde dehydrogenase family. In terms of assembly, forms homodimers.

It localises to the peroxisome. The catalysed reaction is 3-aminopropanal + NAD(+) + H2O = beta-alanine + NADH + 2 H(+). It carries out the reaction 4-aminobutanal + NAD(+) + H2O = 4-aminobutanoate + NADH + 2 H(+). It catalyses the reaction 4-guanidinobutanal + NAD(+) + H2O = 4-guanidinobutanoate + NADH + 2 H(+). Its pathway is amine and polyamine biosynthesis; betaine biosynthesis via choline pathway; betaine from betaine aldehyde: step 1/1. In terms of biological role, dehydrogenase that catalyzes the oxidation of several aminoaldehydes. Metabolizes and detoxifies aldehyde products of polyamine degradation to non-toxic amino acids. Catalyzes the oxidation of 3-aminopropanal to beta-alanine. Catalyzes the oxidation of 4-aminobutanal to 4-aminobutanoate. Catalyzes the oxidation of 4-guanidinobutanal to 4-guanidinobutanoate. In Pisum sativum (Garden pea), this protein is Aminoaldehyde dehydrogenase 2, peroxisomal.